The following is a 444-amino-acid chain: Adenylosuccinate synthetase (444 aa).

Residues 12-18 (GDEGKGK) and 40-42 (GHT) contribute to the GTP site. The active-site Proton acceptor is Asp13. Mg(2+) contacts are provided by Asp13 and Gly40. Residues 13 to 16 (DEGK), 38 to 41 (NAGH), Thr128, Arg142, Gln223, Thr238, and Arg302 contribute to the IMP site. The Proton donor role is filled by His41. 298–304 (TTTGRRR) contributes to the substrate binding site. GTP contacts are provided by residues Arg304, 330–332 (KLD), and 412–414 (SLG).

Belongs to the adenylosuccinate synthetase family. Homodimer. Mg(2+) serves as cofactor.

The protein resides in the cytoplasm. The enzyme catalyses IMP + L-aspartate + GTP = N(6)-(1,2-dicarboxyethyl)-AMP + GDP + phosphate + 2 H(+). Its pathway is purine metabolism; AMP biosynthesis via de novo pathway; AMP from IMP: step 1/2. Functionally, plays an important role in the de novo pathway of purine nucleotide biosynthesis. Catalyzes the first committed step in the biosynthesis of AMP from IMP. The sequence is that of Adenylosuccinate synthetase from Synechococcus sp. (strain ATCC 27144 / PCC 6301 / SAUG 1402/1) (Anacystis nidulans).